A 218-amino-acid chain; its full sequence is Thiamine-phosphate synthase (218 aa).

4-amino-2-methyl-5-(diphosphooxymethyl)pyrimidine contacts are provided by residues 36–40 (QVRSK) and D70. Mg(2+) is bound by residues D71 and D94. T113 provides a ligand contact to 4-amino-2-methyl-5-(diphosphooxymethyl)pyrimidine. Position 141 to 143 (141 to 143 (TPT)) interacts with 2-[(2R,5Z)-2-carboxy-4-methylthiazol-5(2H)-ylidene]ethyl phosphate. K144 lines the 4-amino-2-methyl-5-(diphosphooxymethyl)pyrimidine pocket.

The protein belongs to the thiamine-phosphate synthase family. The cofactor is Mg(2+).

It carries out the reaction 2-[(2R,5Z)-2-carboxy-4-methylthiazol-5(2H)-ylidene]ethyl phosphate + 4-amino-2-methyl-5-(diphosphooxymethyl)pyrimidine + 2 H(+) = thiamine phosphate + CO2 + diphosphate. The catalysed reaction is 2-(2-carboxy-4-methylthiazol-5-yl)ethyl phosphate + 4-amino-2-methyl-5-(diphosphooxymethyl)pyrimidine + 2 H(+) = thiamine phosphate + CO2 + diphosphate. It catalyses the reaction 4-methyl-5-(2-phosphooxyethyl)-thiazole + 4-amino-2-methyl-5-(diphosphooxymethyl)pyrimidine + H(+) = thiamine phosphate + diphosphate. It participates in cofactor biosynthesis; thiamine diphosphate biosynthesis; thiamine phosphate from 4-amino-2-methyl-5-diphosphomethylpyrimidine and 4-methyl-5-(2-phosphoethyl)-thiazole: step 1/1. Functionally, condenses 4-methyl-5-(beta-hydroxyethyl)thiazole monophosphate (THZ-P) and 2-methyl-4-amino-5-hydroxymethyl pyrimidine pyrophosphate (HMP-PP) to form thiamine monophosphate (TMP). The protein is Thiamine-phosphate synthase of Corynebacterium jeikeium (strain K411).